Consider the following 459-residue polypeptide: MKSSGKPLAAPKVGMVSLGCPKALVDSEQIITQLRAEGYEISGTYDGADLVVVNTCGFIDEAVQESLDAIGEALAENGKVIVTGCLGAKKSASGSGLIAEVHPKVLAVTGPHAVGEVMQAVHSHLPKPHDPFVDLVPAAGIKLTPRHYAYLKISEGCNHRCSFCIIPSMRGELVSRPVAEVMLEAENLFKSGVKELLVISQDTSAYGVDVKYRTGFWNGRPLKTRMTELVGALGELAAQYGAWVRLHYVYPYPHVDEIIPMMAQGPLKGHVLPYLDVPFQHAHPEVLKRMKRPANAERVLERVQKWREICPDLTIRSTFIAGFPGETDAQFETLLDFIREAELDRVGCFAYSPVEGASANALDGALPDDVREARRARFMEVAEEVSAARIARKVGKTLKVLIDEVNAEGGIGRTAADAPEIDGVVYVEPAAKASKRYKVGEFVSVKITGADGHDLWGEV.

The region spanning 11-126 (PKVGMVSLGC…VMQAVHSHLP (116 aa)) is the MTTase N-terminal domain. Residues Cys-20, Cys-56, Cys-85, Cys-157, Cys-161, and Cys-164 each contribute to the [4Fe-4S] cluster site. Residues 143–388 (LTPRHYAYLK…MEVAEEVSAA (246 aa)) enclose the Radical SAM core domain. Positions 391 to 459 (ARKVGKTLKV…ADGHDLWGEV (69 aa)) constitute a TRAM domain.

This sequence belongs to the methylthiotransferase family. RimO subfamily. [4Fe-4S] cluster serves as cofactor.

The protein localises to the cytoplasm. The catalysed reaction is L-aspartate(89)-[ribosomal protein uS12]-hydrogen + (sulfur carrier)-SH + AH2 + 2 S-adenosyl-L-methionine = 3-methylsulfanyl-L-aspartate(89)-[ribosomal protein uS12]-hydrogen + (sulfur carrier)-H + 5'-deoxyadenosine + L-methionine + A + S-adenosyl-L-homocysteine + 2 H(+). Catalyzes the methylthiolation of an aspartic acid residue of ribosomal protein uS12. The chain is Ribosomal protein uS12 methylthiotransferase RimO from Burkholderia pseudomallei (strain K96243).